Consider the following 409-residue polypeptide: FAD-dependent monooxygenase phnB (409 aa).

Glu35, Ala50, Arg110, and Asp311 together coordinate FAD.

Belongs to the paxM FAD-dependent monooxygenase family. FAD is required as a cofactor.

It catalyses the reaction 3,6,7,9-tetrahydroxy-3-methyl-2,3-dihydro-1H-naphtho[2,1-b]pyran-1-one + NADPH + O2 + H(+) = 2,3,4,7,9-pentahydroxy-6-methyl-1H-phenalen-1-one + NADP(+) + 2 H2O. It participates in secondary metabolite biosynthesis. In terms of biological role, FAD-dependent monooxygenase; part of the gene cluster that mediates the biosynthesis of phenalenones such as herqueinone, compounds that have been reported to treat tumors, bacterial infections and/or mycoses, and rheumatic diseases. The non-reducing polyketide synthase phnA synthesizes the heptaketide backbone and cyclizes it into the angular, hemiketal-containing naphtho-gamma-pyrone prephenalenone. The product template (PT) domain of phnA catalyzes only the C4-C9 aldol condensation, which is unprecedented among known PT domains. The transformation of prephenalenone to phenalenones requires an FAD-dependent monooxygenase phnB, which catalyzes the C2 aromatic hydroxylation of prephenalenone and ring opening of the gamma-pyrone ring simultaneously. Subsequent intramolecular deprotonation of C3 phenolic oxygen accelerates phenalenone ring closure to yield the tricyclic phenalenone core with a C2 hydroxylation. The prenyltransferase phnF further catalyzes reverse C-prenylation of phenalenone by direct electrophilic substitution at C6, or possibly via first a forward O-prenylation of a neighboring phenol in phenalenone, followed by a Claisen rearrangement. The hydroalkoxylation enzyme phnH catalyzes the 5-exo-trig cyclization via acid catalysis after the spontaneous deprotonation of 7-OH, which leads to the formation of the dihydrobenzofuran atrovenetin. Atrovenetin is further converted to deoxyherqueinone by the O-methyltransferase phnC which can methylate C2-OH to stabilize the northern portion of the phenalenone core. Finally, the oxidoreductase phnG converts deoxyherqueinone to herqueinone via C6 hydroxylation. The chain is FAD-dependent monooxygenase phnB from Penicillium herquei.